We begin with the raw amino-acid sequence, 510 residues long: NAD(P)H-quinone oxidoreductase subunit 2, chloroplastic (510 aa).

12 helical membrane passes run Leu-24–Leu-44, Trp-59–Trp-79, Ile-99–Ile-119, Met-124–Cys-144, Leu-149–Tyr-169, Tyr-183–Gly-203, Ile-229–Phe-249, Trp-295–Ile-315, Met-323–Asp-343, Gly-347–Ala-367, Ala-395–Phe-415, and Leu-418–Leu-438.

This sequence belongs to the complex I subunit 2 family. In terms of assembly, NDH is composed of at least 16 different subunits, 5 of which are encoded in the nucleus.

The protein localises to the plastid. It is found in the chloroplast thylakoid membrane. It catalyses the reaction a plastoquinone + NADH + (n+1) H(+)(in) = a plastoquinol + NAD(+) + n H(+)(out). It carries out the reaction a plastoquinone + NADPH + (n+1) H(+)(in) = a plastoquinol + NADP(+) + n H(+)(out). NDH shuttles electrons from NAD(P)H:plastoquinone, via FMN and iron-sulfur (Fe-S) centers, to quinones in the photosynthetic chain and possibly in a chloroplast respiratory chain. The immediate electron acceptor for the enzyme in this species is believed to be plastoquinone. Couples the redox reaction to proton translocation, and thus conserves the redox energy in a proton gradient. The sequence is that of NAD(P)H-quinone oxidoreductase subunit 2, chloroplastic from Yucca glauca (Soapweed yucca).